An 83-amino-acid polypeptide reads, in one-letter code: RNA-binding protein Hfq (83 aa).

A Sm domain is found at 9-68 (DPYLNALRKERIPVSIFLVNGIKLQGQIESFDQFVILLKNTVSQMVYKHAISTVVPARNV).

It belongs to the Hfq family. Homohexamer.

In terms of biological role, RNA chaperone that binds small regulatory RNA (sRNAs) and mRNAs to facilitate mRNA translational regulation in response to envelope stress, environmental stress and changes in metabolite concentrations. Also binds with high specificity to tRNAs. The polypeptide is RNA-binding protein Hfq (Hahella chejuensis (strain KCTC 2396)).